Reading from the N-terminus, the 563-residue chain is Secreted lipase ARB07186/07185 (563 aa).

Residues 1–20 (MAKYDFVMLWILTLTAAIAA) form the signal peptide. The cysteines at positions 83 and 101 are disulfide-linked. S215 serves as the catalytic Acyl-ester intermediate. A disulfide bridge connects residues C268 and C281.

Belongs to the type-B carboxylesterase/lipase family.

It localises to the secreted. The enzyme catalyses a triacylglycerol + H2O = a diacylglycerol + a fatty acid + H(+). The polypeptide is Secreted lipase ARB07186/07185 (Arthroderma benhamiae (strain ATCC MYA-4681 / CBS 112371) (Trichophyton mentagrophytes)).